A 492-amino-acid polypeptide reads, in one-letter code: PTS system N-acetylmuramic acid-specific EIIBC component (492 aa).

One can recognise a PTS EIIB type-1 domain in the interval 1–89 (MAKINQSVIA…NELLNSSTPT (89 aa)). C28 (phosphocysteine intermediate; for EIIB activity) is an active-site residue. The PTS EIIC type-1 domain maps to 123 to 487 (TKFATIFTPL…KKIEVLKADV (365 aa)). Transmembrane regions (helical) follow at residues 125–145 (FATI…LLGF), 167–187 (IIGY…ILIG), 193–213 (AFGG…LSYN), 227–247 (FFGY…AAIL), 265–285 (MILT…IFIM), 311–331 (ILAG…FVPV), 344–364 (LFPI…ALYV), 378–398 (GAII…VTLP), 403–423 (FITA…IAYL), and 450–470 (IFVG…SGFV).

It localises to the cell inner membrane. It carries out the reaction N-acetyl-beta-D-muramate(out) + N(pros)-phospho-L-histidyl-[protein] = N-acetyl-beta-D-muramate 6-phosphate(in) + L-histidyl-[protein]. Its function is as follows. The phosphoenolpyruvate-dependent sugar phosphotransferase system (sugar PTS), a major carbohydrate active transport system, catalyzes the phosphorylation of incoming sugar substrates concomitantly with their translocation across the cell membrane. This system is involved in N-acetylmuramic acid (MurNAc) transport, yielding cytoplasmic MurNAc-6-P. Is also able to take up anhydro-N-acetylmuramic acid (anhMurNAc), but cannot phosphorylate the carbon 6, probably because of the 1,6-anhydro ring. The chain is PTS system N-acetylmuramic acid-specific EIIBC component (murP) from Photorhabdus laumondii subsp. laumondii (strain DSM 15139 / CIP 105565 / TT01) (Photorhabdus luminescens subsp. laumondii).